A 911-amino-acid polypeptide reads, in one-letter code: MDAHDGEADELPPPPPVPANVVPIKADDVESEVPANKPAKPKRFPMARPGLGRKGQPIQLLANHYKVSVKSSEEYFFHYNVILKYEDDRPVDGKGVGRKVIDKLQQTYRSELSSKDFAYDGEKSLFTIGALPQVTNEFTVVLEDVSTGKTAANGSPGGNDSPGGSDRKRVRRPYQTKTFKVELCFAAKIPMNAIAQAIKGQESENSQEALRVLDIILRQHSAKQGCLLVRQSFFHNNPNNFVDLGGGVMGCRGFHSSFRGTQSGLSLNIDVSTTMIVKPGPVIDFLLANQKVDHPDRIDWQKAKRALKNLRIRTTPVNSEFKIIGLSDRNCNEQMFSLRQRNGNNGDVDEVEVTVYDYFVKNKGIELRYSGNLPCINVGKPKRPTYFPIELCSLIPLQRYTKALSTLQRSSLVEKSRQKPQERMSVLNDALRHSNYDSDPMLRASGISIAQNFTQVEGRVLQPPKLKAGNGEDIFPRNGRWNFNNKKLIQTCSVDKWAVVNFSARCDVRNLIRDLIRNASAKGIQMAEPFDVFEESPSLRRAPVSRRVDDMFEQIKSKLPGAPKFLLCLLPERKNCEVYGPWKRKCLAEFGIVTQCLAPQRVNDQYLLNLLLKINAKLGGINSLLQIEASPSIPLVSKTPTIILGMDVSHGQPGQSDRPSIAAVVSSRQWPLISKYRASVHTQSPKLEMMSSLFKPRGTEDDGLIRESLIDFYTSSGKRKPDHVIVFRDGVSESQFTQVINIELDQIIEACKFLDEKWSPKFTVIVAQKNHHTKFFQSGSPDNVPPGTVVDKQVCHPRNYDFYMCAHAGMIGTTRPTHYHVLHDEIGFSPDDLQELVHSLSYVYQRSTTAISVVAPICYAHLAAAQVGTFLKFEDMSDASSSQGGHTSVGSVPVPELPRLHEKVRSSMFFC.

Disordered regions lie at residues 1 to 51 (MDAH…RPGL) and 149 to 171 (KTAA…KRVR). One can recognise a PAZ domain in the interval 281–396 (PVIDFLLANQ…FPIELCSLIP (116 aa)). Residues 565–872 (FLLCLLPERK…AAAQVGTFLK (308 aa)) form the Piwi domain.

The protein belongs to the argonaute family. Ago subfamily.

Functionally, probably involved in the RNA silencing pathway. May bind to short RNAs such as microRNAs (miRNAs) or short interfering RNAs (siRNAs), and represses the translation of mRNAs which are complementary to them. This chain is Protein argonaute 4B (AGO4B), found in Oryza sativa subsp. japonica (Rice).